Consider the following 885-residue polypeptide: DNA mismatch repair protein MutS (885 aa).

ATP is bound at residue 626-633 (GPNMGGKS).

The protein belongs to the DNA mismatch repair MutS family.

Functionally, this protein is involved in the repair of mismatches in DNA. It is possible that it carries out the mismatch recognition step. This protein has a weak ATPase activity. The chain is DNA mismatch repair protein MutS from Burkholderia ambifaria (strain MC40-6).